Consider the following 313-residue polypeptide: Caffeic acid 3-O-methyltransferase (313 aa).

Residue 112-118 (IDQDRVF) coordinates substrate. The tract at residues 144–162 (AFDYPGTDPRFNKIFNRAM) is substrate binding. Gly-190, Asp-213, Asp-233, Met-234, and Lys-247 together coordinate S-adenosyl-L-methionine. Residue His-251 is the Proton acceptor of the active site.

It belongs to the class I-like SAM-binding methyltransferase superfamily. Cation-independent O-methyltransferase family. COMT subfamily. As to quaternary structure, homodimer.

It carries out the reaction (E)-caffeate + S-adenosyl-L-methionine = (E)-ferulate + S-adenosyl-L-homocysteine + H(+). The protein operates within aromatic compound metabolism; phenylpropanoid biosynthesis. Functionally, catalyzes the conversion of caffeic acid to ferulic acid and of 5-hydroxyferulic acid to sinapic acid. The resulting products may subsequently be converted to the corresponding alcohols that are incorporated into lignins. This is Caffeic acid 3-O-methyltransferase (COMT1) from Eucalyptus globulus (Tasmanian blue gum).